Consider the following 194-residue polypeptide: Histone H1.0 (194 aa).

Met-1 is subject to N-acetylmethionine. Low complexity predominate over residues 1–11 (MTENSTSAPAA). Residues 1-29 (MTENSTSAPAAKPKRAKASKKSTDHPKYS) form a disordered region. Position 2 is an N-acetylthreonine; partial; in Histone H1.0, N-terminally processed (Thr-2). Asn-4 bears the Deamidated asparagine; partial mark. The 74-residue stretch at 24–97 (DHPKYSDMIV…GASGSFRLAK (74 aa)) folds into the H15 domain. Arg-42 is subject to Citrulline. The segment at 84 to 194 (TKGVGASGSF…SSAKRAGKKK (111 aa)) is disordered. An ADP-ribosylserine modification is found at Ser-104. Residues 105-194 (VAFKKTKKEI…SSAKRAGKKK (90 aa)) show a composition bias toward basic residues.

This sequence belongs to the histone H1/H5 family. In terms of processing, phosphorylated on Ser-17 in RNA edited version. ADP-ribosylated on Ser-104 in response to DNA damage.

The protein localises to the nucleus. It is found in the chromosome. Its function is as follows. Histones H1 are necessary for the condensation of nucleosome chains into higher-order structures. The histones H1.0 are found in cells that are in terminal stages of differentiation or that have low rates of cell division. This chain is Histone H1.0, found in Homo sapiens (Human).